Here is a 160-residue protein sequence, read N- to C-terminus: S-adenosylmethionine decarboxylase proenzyme (160 aa).

The active-site Schiff-base intermediate with substrate; via pyruvic acid is serine 73. Serine 73 is modified (pyruvic acid (Ser); by autocatalysis). Histidine 78 acts as the Proton acceptor; for processing activity in catalysis. Cysteine 93 functions as the Proton donor; for catalytic activity in the catalytic mechanism.

The protein belongs to the prokaryotic AdoMetDC family. Type 1 subfamily. Heterotetramer of two alpha and two beta chains arranged as a dimer of alpha/beta heterodimers. The cofactor is pyruvate. In terms of processing, is synthesized initially as an inactive proenzyme. Formation of the active enzyme involves a self-maturation process in which the active site pyruvoyl group is generated from an internal serine residue via an autocatalytic post-translational modification. Two non-identical subunits are generated from the proenzyme in this reaction, and the pyruvate is formed at the N-terminus of the alpha chain, which is derived from the carboxyl end of the proenzyme. The post-translation cleavage follows an unusual pathway, termed non-hydrolytic serinolysis, in which the side chain hydroxyl group of the serine supplies its oxygen atom to form the C-terminus of the beta chain, while the remainder of the serine residue undergoes an oxidative deamination to produce ammonia and the pyruvoyl group blocking the N-terminus of the alpha chain.

It catalyses the reaction S-adenosyl-L-methionine + H(+) = S-adenosyl 3-(methylsulfanyl)propylamine + CO2. The protein operates within amine and polyamine biosynthesis; S-adenosylmethioninamine biosynthesis; S-adenosylmethioninamine from S-adenosyl-L-methionine: step 1/1. Catalyzes the decarboxylation of S-adenosylmethionine to S-adenosylmethioninamine (dcAdoMet), the propylamine donor required for the synthesis of the polyamines spermine and spermidine from the diamine putrescine. The protein is S-adenosylmethionine decarboxylase proenzyme of Pseudomonas aeruginosa (strain LESB58).